A 251-amino-acid chain; its full sequence is Triosephosphate isomerase (251 aa).

Position 9–11 (9–11 (NWK)) interacts with substrate. His95 acts as the Electrophile in catalysis. Residue Glu167 is the Proton acceptor of the active site. Residues Gly173, Ser212, and 233–234 (GG) contribute to the substrate site.

This sequence belongs to the triosephosphate isomerase family. Homodimer.

The protein resides in the cytoplasm. It carries out the reaction D-glyceraldehyde 3-phosphate = dihydroxyacetone phosphate. The protein operates within carbohydrate biosynthesis; gluconeogenesis. It functions in the pathway carbohydrate degradation; glycolysis; D-glyceraldehyde 3-phosphate from glycerone phosphate: step 1/1. In terms of biological role, involved in the gluconeogenesis. Catalyzes stereospecifically the conversion of dihydroxyacetone phosphate (DHAP) to D-glyceraldehyde-3-phosphate (G3P). This Pseudomonas syringae pv. syringae (strain B728a) protein is Triosephosphate isomerase.